We begin with the raw amino-acid sequence, 538 residues long: Metal transporter Nramp5 (538 aa).

12 consecutive transmembrane segments (helical) span residues 44 to 64 (FLAH…PGNL), 77 to 97 (ELLW…SLAA), 118 to 138 (FVKI…DIPE), 140 to 160 (IGTA…GVLI), 181 to 201 (FLIS…LSIV), 227 to 247 (IALL…ALVL), 264 to 284 (FFLY…IAVV), 324 to 346 (SAIV…GTYA), 365 to 385 (NLMT…IGGS), 391 to 411 (LIII…IPLL), 427 to 447 (IYII…NMYF), and 467 to 487 (VLVG…VVYL). Residues 518–538 (AVDDDEPLPYRDDLADIPLPR) form a disordered region.

The protein belongs to the NRAMP (TC 2.A.55) family.

It is found in the membrane. Functionally, probable metal transporter. This chain is Metal transporter Nramp5 (NRAMP5), found in Oryza sativa subsp. japonica (Rice).